The following is a 502-amino-acid chain: Chromatin structure-remodeling complex protein RSC58 (502 aa).

Residues 19–134 form the Bromo domain; it reads SILNAASVKC…KFSSELLLRE (116 aa). The tract at residues 336 to 378 is disordered; it reads NEEGINRKQNDENNKNVDGKSNGVQDDGGDNDNDATIASANSE. Over residues 339–353 the composition is skewed to basic and acidic residues; the sequence is GINRKQNDENNKNVD.

Component of the two forms of the RSC complex composed of at least either RSC1 or RSC2, and ARP7, ARP9, LDB7, NPL6, RSC3, RSC30, RSC4, RSC58, RSC6, RSC8, RSC9, SFH1, STH1, HTL1 and probably RTT102. The complexes interact with histone and histone variant components of centromeric chromatin.

It is found in the nucleus. Component of the chromatin structure-remodeling complex (RSC), which is involved in transcription regulation and nucleosome positioning. RSC is responsible for the transfer of a histone octamer from a nucleosome core particle to naked DNA. The reaction requires ATP and involves an activated RSC-nucleosome intermediate. Remodeling reaction also involves DNA translocation, DNA twist and conformational change. As a reconfigurer of centromeric and flanking nucleosomes, RSC complex is required both for proper kinetochore function in chromosome segregation and, via a PKC1-dependent signaling pathway, for organization of the cellular cytoskeleton. The sequence is that of Chromatin structure-remodeling complex protein RSC58 (RSC58) from Saccharomyces cerevisiae (strain ATCC 204508 / S288c) (Baker's yeast).